Consider the following 479-residue polypeptide: 3-phytase B (479 aa).

Residues 1–19 (MPRTSLLTLACALATGASA) form the signal peptide. H82 acts as the Nucleophile in catalysis. 5 N-linked (GlcNAc...) asparagine glycosylation sites follow: N106, N191, N227, N250, and N315. D338 acts as the Proton donor in catalysis. N-linked (GlcNAc...) asparagine glycans are attached at residues N425, N442, and N458.

It belongs to the histidine acid phosphatase family.

It catalyses the reaction 1D-myo-inositol hexakisphosphate + H2O = 1D-myo-inositol 1,2,4,5,6-pentakisphosphate + phosphate. In terms of biological role, catalyzes the hydrolysis of inorganic orthophosphate from phytate. This is 3-phytase B (phyB) from Aspergillus niger.